A 145-amino-acid polypeptide reads, in one-letter code: Large ribosomal subunit protein uL15 (145 aa).

The segment at 1 to 58 (MFSLLKPKGAAKRRKIVGRGPGSGLGKTSGRGQKGQKARNTSPRLGFEGGQTPLYRRL) is disordered. Residues 19–33 (RGPGSGLGKTSGRGQ) show a composition bias toward gly residues.

This sequence belongs to the universal ribosomal protein uL15 family. As to quaternary structure, part of the 50S ribosomal subunit.

Functionally, binds to the 23S rRNA. In Borreliella afzelii (strain PKo) (Borrelia afzelii), this protein is Large ribosomal subunit protein uL15.